Reading from the N-terminus, the 359-residue chain is MDPLGPAKPQWSWRCCLTTLLFQLLVAVCFFSYLRVSRDDPTVYPNGSHFPDSTGTPAHSIPLILLWTWPFNKPIALPRCSEMVPGTADCNITADRKVYPQADAVIVHHREVMYNPSAQLPRSPRRQGQRWIWFSMESPSNCRHLEALDGYFNLTMSYRSDSDIFTPYGWLQPWSGQPVHPPLNLSAKTELVAWAVSNWGPNSARVRYYQSLQAHLKVDVYGRSHKPLPQGTMMETLSRYKFYLAFENSLHPDYITEKLWRNALEAWAVPVVLGPSRSNYERFLPPDAFIHVDDFQSPKDLARYLQELDKDHARYLSYFRWRETLRPRFFSWALAFCKACWKLQEESRYQTRSIAAWFT.

The Cytoplasmic portion of the chain corresponds to 1–14 (MDPLGPAKPQWSWR). The helical; Signal-anchor for type II membrane protein transmembrane segment at 15–34 (CCLTTLLFQLLVAVCFFSYL) threads the bilayer. At 35–359 (RVSRDDPTVY…QTRSIAAWFT (325 aa)) the chain is on the lumenal side. Asparagine 46, asparagine 91, asparagine 153, and asparagine 184 each carry an N-linked (GlcNAc...) asparagine glycan. Residues 73–112 (KPIALPRCSEMVPGTADCNITADRKVYPQADAVIVHHREV) are determines site-specific fucosylation.

This sequence belongs to the glycosyltransferase 10 family. Homodimer and monomer. Monomer (secreted form). Post-translationally, N-glycosylated. Proteolytic cleavage releases a secreted glycoform of 43 kDa.

The protein resides in the golgi apparatus. The protein localises to the golgi stack membrane. It localises to the secreted. The enzyme catalyses a beta-D-galactosyl-(1-&gt;4)-N-acetyl-beta-D-glucosaminyl derivative + GDP-beta-L-fucose = a beta-D-galactosyl-(1-&gt;4)-[alpha-L-fucosyl-(1-&gt;3)]-N-acetyl-beta-D-glucosaminyl derivative + GDP + H(+). The catalysed reaction is an N-acetyl-alpha-neuraminyl-(2-&gt;3)-beta-D-galactosyl-(1-&gt;4)-N-acetyl-beta-D-glucosaminyl derivative + GDP-beta-L-fucose = an alpha-Neu5Ac-(2-&gt;3)-beta-D-Gal-(1-&gt;4)-[alpha-L-Fuc-(1-&gt;3)]-beta-D-GlcNAc derivative + GDP + H(+). It catalyses the reaction an alpha-Neu5Ac-(2-&gt;3)-beta-D-Gal-(1-&gt;4)-beta-D-GlcNAc-(1-&gt;3)-beta-D-Gal-(1-&gt;4)-[alpha-L-Fuc-(1-&gt;3)]-beta-D-GlcNAc derivative + GDP-beta-L-fucose = an alpha-Neu5Ac-(2-&gt;3)-beta-D-Gal-(1-&gt;4)-[alpha-L-Fuc-(1-&gt;3)]-beta-D-GlcNAc-(1-&gt;3)-beta-D-Gal-(1-&gt;4)-[alpha-L-Fuc-(1-&gt;3)]-beta-D-GlcNAc derivative + GDP + H(+). It carries out the reaction a neolactoside nLc6Cer + GDP-beta-L-fucose = beta-D-Gal-(1-&gt;4)-[alpha-L-Fuc-(1-&gt;3)]-beta-D-GlcNAc-(1-&gt;3)-beta-D-Gal-(1-&gt;4)-beta-D-GlcNAc-(1-&gt;3)-beta-D-Gal-(1-&gt;4)-beta-D-Glc-(1&lt;-&gt;1')-Cer + GDP + H(+). The enzyme catalyses a neolactoside nLc6Cer + GDP-beta-L-fucose = beta-D-galactosyl-(1-&gt;4)-N-acetyl-beta-D-glucosaminyl-(1-&gt;3)-beta-D-galactosyl-(1-&gt;4)-[alpha-L-fucosyl-(1-&gt;3)]-N-acetyl-beta-D-glucosaminyl-(1-&gt;3)-beta-D-galactosyl-(1-&gt;4)-beta-D-glucosyl-(1&lt;-&gt;1')-ceramide + GDP + H(+). The catalysed reaction is a neolactoside VI(3)-alpha-NeuNAc-nLc6Cer + GDP-beta-L-fucose = a neolactoside VI(3)-alpha-NeuAc,V(3)-alphaFuc-nLc6Cer + GDP + H(+). It catalyses the reaction beta-D-galactosyl-(1-&gt;4)-N-acetyl-D-glucosamine + GDP-beta-L-fucose = beta-D-galactosyl-(1-&gt;4)-[alpha-L-fucosyl-(1-&gt;3)]-N-acetyl-D-glucosamine + GDP + H(+). It carries out the reaction N-acetyl-alpha-neuraminosyl-(2-&gt;3)-beta-D-galactosyl-(1-&gt;4)-N-acetyl-beta-D-glucosamine + GDP-beta-L-fucose = N-acetyl-alpha-neuraminosyl-(2-&gt;3)-beta-D-galactosyl-(1-&gt;4)-[alpha-L-fucosyl-(1-&gt;3)]-N-acetyl-beta-D-glucosamine + GDP + H(+). The enzyme catalyses lactose + GDP-beta-L-fucose = beta-D-galactosyl-(1-&gt;4)-[alpha-L-fucosyl-(1-&gt;3)]-D-glucose + GDP + H(+). The catalysed reaction is alpha-L-Fuc-(1-&gt;2)-beta-D-Gal-(1-&gt;4)-D-Glc + GDP-beta-L-fucose = alpha-L-Fuc-(1-&gt;2)-beta-D-Gal-(1-&gt;4)-[alpha-L-Fuc-(1-&gt;3)]-D-Glc + GDP + H(+). It catalyses the reaction a beta-D-galactosyl-(1-&gt;4)-N-acetyl-beta-D-6-sulfooxy-glucosaminyl derivative + GDP-beta-L-fucose = a beta-D-galactosyl-(1-&gt;4)-[alpha-L-fucosyl-(1-&gt;3)]-N-acetyl-beta-D-6-sulfooxy-glucosaminyl derivative + GDP + H(+). It participates in protein modification; protein glycosylation. In terms of biological role, catalyzes the transfer of L-fucose, from a guanosine diphosphate-beta-L-fucose, to the N-acetyl glucosamine (GlcNAc) of a distal alpha2,3 sialylated lactosamine unit of a glycoprotein- or glycolipid-linked sialopolylactosamines chain or of a distal or internal lactosamine unit of a neutral glycoprotein- or glycolipid-linked polylactosamines chain through an alpha-1,3 glycosidic linkage and participates in surface expression of the sialyl Lewis X (sLe(x)), Lewis X (Le(x)) and non sialylated VIM2 determinants. Moreover transfers fucose to H-type 2 (Fucalpha1-2Galbeta1-4GlcNAc) chain acceptor substrates and participates in difucosylated sialyl Lewis x determinants. Also fucosylates a polylactosamine substrate having a 6 sulfate modification at the GlcNAc moiety and gives rise to sialyl and non-sialyl 6-sulfo lewis X. Does not have activity towards type 1 ((Galbeta1-3GlcNAc)) and H-type 1 chain (Fucalpha1-2Galbeta1-3GlcNAc) acceptors substrates. The sequence is that of 4-galactosyl-N-acetylglucosaminide 3-alpha-L-fucosyltransferase FUT6 from Pan troglodytes (Chimpanzee).